The following is a 250-amino-acid chain: Ubiquinone/menaquinone biosynthesis C-methyltransferase UbiE (250 aa).

Residues S73, D94, and N122–A123 contribute to the S-adenosyl-L-methionine site.

It belongs to the class I-like SAM-binding methyltransferase superfamily. MenG/UbiE family.

The catalysed reaction is a 2-demethylmenaquinol + S-adenosyl-L-methionine = a menaquinol + S-adenosyl-L-homocysteine + H(+). It catalyses the reaction a 2-methoxy-6-(all-trans-polyprenyl)benzene-1,4-diol + S-adenosyl-L-methionine = a 5-methoxy-2-methyl-3-(all-trans-polyprenyl)benzene-1,4-diol + S-adenosyl-L-homocysteine + H(+). Its pathway is quinol/quinone metabolism; menaquinone biosynthesis; menaquinol from 1,4-dihydroxy-2-naphthoate: step 2/2. It functions in the pathway cofactor biosynthesis; ubiquinone biosynthesis. Functionally, methyltransferase required for the conversion of demethylmenaquinol (DMKH2) to menaquinol (MKH2) and the conversion of 2-polyprenyl-6-methoxy-1,4-benzoquinol (DDMQH2) to 2-polyprenyl-3-methyl-6-methoxy-1,4-benzoquinol (DMQH2). The sequence is that of Ubiquinone/menaquinone biosynthesis C-methyltransferase UbiE from Legionella pneumophila (strain Corby).